A 418-amino-acid polypeptide reads, in one-letter code: Probable serine hydroxymethyltransferase (418 aa).

Residues Leu-118 and Gly-122 to Leu-124 each bind (6S)-5,6,7,8-tetrahydrofolate. Position 226 is an N6-(pyridoxal phosphate)lysine (Lys-226). Ser-351–Phe-353 contributes to the (6S)-5,6,7,8-tetrahydrofolate binding site.

The protein belongs to the SHMT family. In terms of assembly, homodimer. Pyridoxal 5'-phosphate serves as cofactor.

The protein resides in the cytoplasm. The catalysed reaction is (6R)-5,10-methylene-5,6,7,8-tetrahydrofolate + glycine + H2O = (6S)-5,6,7,8-tetrahydrofolate + L-serine. It participates in one-carbon metabolism; tetrahydrofolate interconversion. In terms of biological role, catalyzes the reversible interconversion of serine and glycine with tetrahydrofolate (THF) serving as the one-carbon carrier. This reaction serves as the major source of one-carbon groups required for the biosynthesis of purines, thymidylate, methionine, and other important biomolecules. The chain is Probable serine hydroxymethyltransferase from Mesomycoplasma hyopneumoniae (strain 7448) (Mycoplasma hyopneumoniae).